The sequence spans 255 residues: Fasciclin-like arabinogalactan protein 14 (255 aa).

The N-terminal stretch at 1 to 23 (MSSSLTIFFFFFASTFLYTSSNS) is a signal peptide. In terms of domain architecture, FAS1 spans 24–169 (FNITNILNEH…ISVLHISSAI (146 aa)). N-linked (GlcNAc...) asparagine glycans are attached at residues Asn-25, Asn-99, Asn-125, and Asn-159. Residues 179 to 231 (PTASPLSPVSSPPRPAESPNDDGQDFDEPPSSAPGAAADEPSENAGSANGVSR) form a disordered region. Acidic residues predominate over residues 197 to 206 (PNDDGQDFDE). Residues 222–231 (NAGSANGVSR) show a composition bias toward polar residues. The GPI-anchor amidated serine moiety is linked to residue Ser-225. The propeptide at 226–255 (ANGVSRNDSQPAFAFTLLMSFIWWFMARLR) is removed in mature form.

It belongs to the fasciclin-like AGP family.

It localises to the cell membrane. May be a cell surface adhesion protein. The polypeptide is Fasciclin-like arabinogalactan protein 14 (FLA14) (Arabidopsis thaliana (Mouse-ear cress)).